The primary structure comprises 439 residues: 26S proteasome regulatory subunit 6A (439 aa).

Position 1 is an N-acetylmethionine (methionine 1). Serine 9 bears the Phosphoserine mark. ATP is bound at residue 227 to 234 (GPPGTGKT). Serine 376 carries the phosphoserine modification.

It belongs to the AAA ATPase family. In terms of assembly, component of the 19S proteasome regulatory particle complex. The 26S proteasome consists of a 20S core particle (CP) and two 19S regulatory subunits (RP). The regulatory particle is made of a lid composed of 9 subunits, a base containing 6 ATPases including PSMC3 and few additional components. Interacts with PAAF1. As to quaternary structure, (Microbial infection) Interacts with HIV-1 Tat. Sumoylated by UBE2I in response to MEKK1-mediated stimuli.

Its subcellular location is the cytoplasm. The protein localises to the nucleus. Functionally, component of the 26S proteasome, a multiprotein complex involved in the ATP-dependent degradation of ubiquitinated proteins. This complex plays a key role in the maintenance of protein homeostasis by removing misfolded or damaged proteins, which could impair cellular functions, and by removing proteins whose functions are no longer required. Therefore, the proteasome participates in numerous cellular processes, including cell cycle progression, apoptosis, or DNA damage repair. PSMC3 belongs to the heterohexameric ring of AAA (ATPases associated with diverse cellular activities) proteins that unfolds ubiquitinated target proteins that are concurrently translocated into a proteolytic chamber and degraded into peptides. The polypeptide is 26S proteasome regulatory subunit 6A (PSMC3) (Homo sapiens (Human)).